A 394-amino-acid chain; its full sequence is Elongation factor Tu (394 aa).

A tr-type G domain is found at Lys-10 to Glu-204. The G1 stretch occupies residues Gly-19 to Thr-26. Residue Gly-19–Thr-26 participates in GTP binding. Residue Thr-26 participates in Mg(2+) binding. The interval Gly-60–Asn-64 is G2. Residues Asp-81 to Gly-84 form a G3 region. Residues Asp-81–His-85 and Asn-136–Asp-139 contribute to the GTP site. A G4 region spans residues Asn-136 to Asp-139. The segment at Ser-174–Leu-176 is G5.

Belongs to the TRAFAC class translation factor GTPase superfamily. Classic translation factor GTPase family. EF-Tu/EF-1A subfamily. Monomer.

The protein resides in the cytoplasm. The catalysed reaction is GTP + H2O = GDP + phosphate + H(+). In terms of biological role, GTP hydrolase that promotes the GTP-dependent binding of aminoacyl-tRNA to the A-site of ribosomes during protein biosynthesis. The polypeptide is Elongation factor Tu (Methylacidiphilum infernorum (isolate V4) (Methylokorus infernorum (strain V4))).